The chain runs to 439 residues: Mitochondrial distribution and morphology protein 12 (439 aa).

The SMP-LTD domain occupies 1 to 439 (MSIDVNWRFA…VYPSFWTFLI (439 aa)). Disordered regions lie at residues 70–103 (YEED…LNEP), 185–274 (GWSD…PPRM), and 354–386 (PEQQ…RHGG). Residues 78–91 (TSDASEERGEEHSS) are compositionally biased toward basic and acidic residues. Positions 215–245 (DTSNSTSRPSTANTLPSHPSGSSKNSGQAAT) are enriched in polar residues. 2 stretches are compositionally biased toward basic and acidic residues: residues 247-261 (RNDH…HLED) and 362-371 (SAGDDHRPQS).

Belongs to the MDM12 family. In terms of assembly, component of the ER-mitochondria encounter structure (ERMES) or MDM complex, composed of mmm1, mdm10, mdm12 and mdm34. A mmm1 homodimer associates with one molecule of mdm12 on each side in a pairwise head-to-tail manner, and the SMP-LTD domains of mmm1 and mdm12 generate a continuous hydrophobic tunnel for phospholipid trafficking.

The protein localises to the mitochondrion outer membrane. It is found in the endoplasmic reticulum membrane. Functionally, component of the ERMES/MDM complex, which serves as a molecular tether to connect the endoplasmic reticulum (ER) and mitochondria. Components of this complex are involved in the control of mitochondrial shape and protein biogenesis, and function in nonvesicular lipid trafficking between the ER and mitochondria. Mdm12 is required for the interaction of the ER-resident membrane protein mmm1 and the outer mitochondrial membrane-resident beta-barrel protein mdm10. The mdm12-mmm1 subcomplex functions in the major beta-barrel assembly pathway that is responsible for biogenesis of all mitochondrial outer membrane beta-barrel proteins, and acts in a late step after the SAM complex. The mdm10-mdm12-mmm1 subcomplex further acts in the TOM40-specific pathway after the action of the mdm12-mmm1 complex. Essential for establishing and maintaining the structure of mitochondria and maintenance of mtDNA nucleoids. This chain is Mitochondrial distribution and morphology protein 12, found in Aspergillus fumigatus (strain CBS 144.89 / FGSC A1163 / CEA10) (Neosartorya fumigata).